The chain runs to 481 residues: Phenylalanine--tRNA ligase alpha subunit (481 aa).

L-phenylalanine is bound by residues T322, Q361–E363, and Y401. E403 serves as a coordination point for Mg(2+). Position 426 (F426) interacts with L-phenylalanine.

It belongs to the class-II aminoacyl-tRNA synthetase family. Phe-tRNA synthetase alpha subunit type 2 subfamily. Tetramer of two alpha and two beta subunits. It depends on Mg(2+) as a cofactor.

It localises to the cytoplasm. It carries out the reaction tRNA(Phe) + L-phenylalanine + ATP = L-phenylalanyl-tRNA(Phe) + AMP + diphosphate + H(+). The sequence is that of Phenylalanine--tRNA ligase alpha subunit from Methanoculleus marisnigri (strain ATCC 35101 / DSM 1498 / JR1).